Consider the following 412-residue polypeptide: Zinc finger protein 821 (412 aa).

The interval 26–83 (RQAMMKTDFPGDLGSQRQAIQQLRDQDSSSSDSEGDEEETTQDEVSSHTSEEDGGVVK) is disordered. Residues 58–67 (SEGDEEETTQ) show a composition bias toward acidic residues. 2 consecutive C2H2-type zinc fingers follow at residues 116–140 (GLCQ…VYQH) and 150–172 (YMCP…LLIH). Positions 257–366 (KWALRRQNEP…EKMDMMLRAQ (110 aa)) form a coiled coil. A disordered region spans residues 278-319 (RTAKKSRRDNETPEEREVRRMRDREAKRLQRMQETDEQRARR).

Belongs to the krueppel C2H2-type zinc-finger protein family.

Its subcellular location is the nucleus. In terms of biological role, may be involved in transcriptional regulation. This Bos taurus (Bovine) protein is Zinc finger protein 821 (ZNF821).